The following is a 346-amino-acid chain: Holliday junction branch migration complex subunit RuvB (346 aa).

Residues 1–16 (MSDADRLITPEKRGED) show a composition bias toward basic and acidic residues. The segment at 1–23 (MSDADRLITPEKRGEDIDTTLRP) is disordered. Residues 1-182 (MSDADRLITP…FGIPVRLAFY (182 aa)) are large ATPase domain (RuvB-L). ATP is bound by residues leucine 21, arginine 22, glycine 63, lysine 66, threonine 67, threonine 68, 129–131 (EDF), arginine 172, tyrosine 182, and arginine 219. Threonine 67 serves as a coordination point for Mg(2+). Positions 183-253 (TVDELELIVR…IADEALTRLL (71 aa)) are small ATPAse domain (RuvB-S). The segment at 256 to 346 (NMGLDQLDMR…AQFRLTLEDD (91 aa)) is head domain (RuvB-H). Residues arginine 292, arginine 311, and arginine 316 each contribute to the DNA site.

This sequence belongs to the RuvB family. As to quaternary structure, homohexamer. Forms an RuvA(8)-RuvB(12)-Holliday junction (HJ) complex. HJ DNA is sandwiched between 2 RuvA tetramers; dsDNA enters through RuvA and exits via RuvB. An RuvB hexamer assembles on each DNA strand where it exits the tetramer. Each RuvB hexamer is contacted by two RuvA subunits (via domain III) on 2 adjacent RuvB subunits; this complex drives branch migration. In the full resolvosome a probable DNA-RuvA(4)-RuvB(12)-RuvC(2) complex forms which resolves the HJ.

The protein localises to the cytoplasm. The catalysed reaction is ATP + H2O = ADP + phosphate + H(+). Its function is as follows. The RuvA-RuvB-RuvC complex processes Holliday junction (HJ) DNA during genetic recombination and DNA repair, while the RuvA-RuvB complex plays an important role in the rescue of blocked DNA replication forks via replication fork reversal (RFR). RuvA specifically binds to HJ cruciform DNA, conferring on it an open structure. The RuvB hexamer acts as an ATP-dependent pump, pulling dsDNA into and through the RuvAB complex. RuvB forms 2 homohexamers on either side of HJ DNA bound by 1 or 2 RuvA tetramers; 4 subunits per hexamer contact DNA at a time. Coordinated motions by a converter formed by DNA-disengaged RuvB subunits stimulates ATP hydrolysis and nucleotide exchange. Immobilization of the converter enables RuvB to convert the ATP-contained energy into a lever motion, pulling 2 nucleotides of DNA out of the RuvA tetramer per ATP hydrolyzed, thus driving DNA branch migration. The RuvB motors rotate together with the DNA substrate, which together with the progressing nucleotide cycle form the mechanistic basis for DNA recombination by continuous HJ branch migration. Branch migration allows RuvC to scan DNA until it finds its consensus sequence, where it cleaves and resolves cruciform DNA. The sequence is that of Holliday junction branch migration complex subunit RuvB from Agrobacterium fabrum (strain C58 / ATCC 33970) (Agrobacterium tumefaciens (strain C58)).